A 482-amino-acid chain; its full sequence is Transcription initiation factor IIE subunit alpha (482 aa).

The 91-residue stretch at 9–99 (VKNLLKFVVR…KYPHAIDAIK (91 aa)) folds into the HTH TFE/IIEalpha-type domain. A C4-type zinc finger spans residues 124-152 (CPICLTKYTQLEAVQLLNFDRTEFLCSLC). The span at 274–286 (RELQERQAEEKRK) shows a compositional bias: basic and acidic residues. Disordered stretches follow at residues 274-295 (RELQ…EWHK) and 321-482 (AMDS…FEDV). A compositionally biased stretch (polar residues) spans 321–345 (AMDSINPDNEPAQETSYQNNRTLTE). Residues 374–401 (EEEEEEEEEEDEEEEEEEEMEDVMDDND) are compositionally biased toward acidic residues. Polar residues predominate over residues 419 to 432 (TAGTAKTESNTSND). Basic and acidic residues predominate over residues 433–444 (VKQESINDKTED). Positions 464 to 482 (GDDDDDDDDDEMDIEFEDV) are enriched in acidic residues.

It belongs to the TFIIE alpha subunit family. As to quaternary structure, TFIIE is a tetramer of two alpha (TFA1) and two beta (TFA2) subunits.

Its subcellular location is the nucleus. Functionally, recruits TFIIH to the initiation complex and stimulates the RNA polymerase II C-terminal domain kinase and DNA-dependent ATPase activities of TFIIH. Both TFIIH and TFIIE are required for promoter clearance by RNA polymerase. The polypeptide is Transcription initiation factor IIE subunit alpha (TFA1) (Saccharomyces cerevisiae (strain ATCC 204508 / S288c) (Baker's yeast)).